A 1480-amino-acid chain; its full sequence is UDP-N-acetylglucosamine--peptide N-acetylglucosaminyltransferase (1480 aa).

4 TPR repeats span residues 38 to 71 (IFLY…SKQK), 113 to 146 (VQVL…STSN), 176 to 209 (ATIL…IKDP), and 288 to 321 (STIC…QPSF). Positions 468–485 (PQEKESPKSDKIASEKPL) are enriched in basic and acidic residues. The interval 468 to 497 (PQEKESPKSDKIASEKPLVESNPGRSRTPS) is disordered. TPR repeat units follow at residues 613–646 (YEPF…NPRF) and 648–680 (DGYL…DPDN). A disordered region spans residues 1093–1128 (LSLDGSDATSSSVDSGIGSRTHSEAPIGGGDKDEGA). The span at 1099 to 1112 (DATSSSVDSGIGSR) shows a compositional bias: polar residues. Residues Gln1269, Lys1272, 1333 to 1336 (HIRR), 1351 to 1353 (GST), and Asp1357 each bind UDP.

The protein belongs to the glycosyltransferase 41 family. O-GlcNAc transferase subfamily.

The protein localises to the cytoplasm. The protein resides in the nucleus. The enzyme catalyses L-seryl-[protein] + UDP-N-acetyl-alpha-D-glucosamine = 3-O-(N-acetyl-beta-D-glucosaminyl)-L-seryl-[protein] + UDP + H(+). It carries out the reaction L-threonyl-[protein] + UDP-N-acetyl-alpha-D-glucosamine = 3-O-(N-acetyl-beta-D-glucosaminyl)-L-threonyl-[protein] + UDP + H(+). It participates in protein modification; protein glycosylation. Its function is as follows. Catalyzes the transfer of a single N-acetylglucosamine from UDP-GlcNAc to a serine or threonine residue in cytoplasmic and nuclear proteins resulting in their modification with a beta-linked N-acetylglucosamine (O-GlcNAc). The sequence is that of UDP-N-acetylglucosamine--peptide N-acetylglucosaminyltransferase from Giardia intestinalis (strain ATCC 50803 / WB clone C6) (Giardia lamblia).